Here is a 585-residue protein sequence, read N- to C-terminus: Voltage-gated potassium channel KCNC1 (585 aa).

At 1 to 190 the chain is on the cytoplasmic side; sequence MGQGDESERI…EDPYSSRYAR (190 aa). Residue Ser-44 is modified to Phosphoserine. 4 residues coordinate Zn(2+): His-77, Cys-83, Cys-104, and Cys-105. Positions 121–147 are disordered; sequence SFGGAPLDNSADDADADGPGDSGDGED. Phosphoserine occurs at positions 130, 142, 158, and 160. The span at 130-147 shows a compositional bias: acidic residues; the sequence is SADDADADGPGDSGDGED. The helical transmembrane segment at 191–209 threads the bilayer; it reads YVAFASLFFILVSITTFCL. Asn-220 and Asn-229 each carry an N-linked (GlcNAc...) asparagine glycan. A helical membrane pass occupies residues 248-267; it reads IEGVCVVWFTFEFLMRVVFC. Topologically, residues 268-276 are cytoplasmic; that stretch reads PNKVEFIKN. Residues 277-295 form a helical membrane-spanning segment; sequence SLNIIDFVAILPFYLEVGL. Residues 309–331 form a helical; Voltage-sensor membrane-spanning segment; the sequence is FLRVVRFVRILRIFKLTRHFVGL. Residues 332-344 are Cytoplasmic-facing; the sequence is RVLGHTLRASTNE. A helical membrane pass occupies residues 345–366; sequence FLLLIIFLALGVLIFATMIYYA. Thr-400, Leu-401, Gly-402, and Tyr-403 together coordinate K(+). Residues 400–405 carry the Selectivity filter motif; sequence TLGYGD. A helical membrane pass occupies residues 415–436; it reads LVGALCALAGVLTIAMPVPVIV. The Cytoplasmic portion of the chain corresponds to 437–585; sequence NNFGMYYSLA…YMPTEAVRVT (149 aa). Phosphoserine is present on Ser-474. A Phosphothreonine modification is found at Thr-483.

Belongs to the potassium channel family. C (Shaw) (TC 1.A.1.2) subfamily. Kv3.1/KCNC1 sub-subfamily. In terms of assembly, homotetramer. Homomultimer. Heteromultimer with KCNG3, KCNG4 and KCNV2. Heteromultimer with KCNC2. Heterotetramer with KCNC3. Interacts with the ancillary subunits KCNE1 and KCNE2; the interaction modulates channel activity. N-glycosylated; contains sialylated glycans. In terms of tissue distribution, expressed in brain. Expressed in globus pallidal neurons of the basal ganglia (at protein level). Detected on Purkinje cells in the cerebellum molecular layer (at protein level).

Its subcellular location is the cell membrane. It is found in the cell projection. The protein localises to the axon. It localises to the presynaptic cell membrane. The catalysed reaction is K(+)(in) = K(+)(out). In terms of biological role, voltage-gated potassium channel that opens in response to the voltage difference across the membrane and through which potassium ions pass in accordance with their electrochemical gradient. The mechanism is time-dependent and inactivation is slow. Plays an important role in the rapid repolarization of fast-firing brain neurons. Can form functional homotetrameric channels and heterotetrameric channels that contain variable proportions of KCNC2, and possibly other family members as well. Contributes to fire sustained trains of very brief action potentials at high frequency in pallidal neurons. The protein is Voltage-gated potassium channel KCNC1 of Rattus norvegicus (Rat).